Consider the following 136-residue polypeptide: Large ribosomal subunit protein uL16 (136 aa).

This sequence belongs to the universal ribosomal protein uL16 family. As to quaternary structure, part of the 50S ribosomal subunit.

Functionally, binds 23S rRNA and is also seen to make contacts with the A and possibly P site tRNAs. In Haemophilus influenzae (strain 86-028NP), this protein is Large ribosomal subunit protein uL16.